The primary structure comprises 79 residues: Protein SIP18 (79 aa).

The interval M1–K79 is disordered. Over residues F8–Q20 the composition is skewed to basic and acidic residues.

The polypeptide is Protein SIP18 (SIP18) (Saccharomyces cerevisiae (strain ATCC 204508 / S288c) (Baker's yeast)).